The chain runs to 778 residues: Endonuclease MutS2 (778 aa).

ATP is bound at residue 328-335 (GPNTGGKT). The Smr domain maps to 702 to 777 (LDLRGKRYEE…GSGATIVTFK (76 aa)).

This sequence belongs to the DNA mismatch repair MutS family. MutS2 subfamily. Homodimer. Binds to stalled ribosomes, contacting rRNA.

Its function is as follows. Endonuclease that is involved in the suppression of homologous recombination and thus may have a key role in the control of bacterial genetic diversity. In terms of biological role, acts as a ribosome collision sensor, splitting the ribosome into its 2 subunits. Detects stalled/collided 70S ribosomes which it binds and splits by an ATP-hydrolysis driven conformational change. Acts upstream of the ribosome quality control system (RQC), a ribosome-associated complex that mediates the extraction of incompletely synthesized nascent chains from stalled ribosomes and their subsequent degradation. Probably generates substrates for RQC. The chain is Endonuclease MutS2 from Streptococcus pneumoniae serotype 2 (strain D39 / NCTC 7466).